A 153-amino-acid polypeptide reads, in one-letter code: CASP-like protein 5B1 (153 aa).

Residues 1 to 20 (MRELAGSPGTWSGLSLRVGQ) are Cytoplasmic-facing. The chain crosses the membrane as a helical span at residues 21 to 41 (LVFAAASVCATASALGFAAYT). A42 is a topological domain (extracellular). The helical transmembrane segment at 43–63 (FCYLIASMGLQALWSLGLACL) threads the bilayer. Residues 64–76 (DCYALKFKKDLHS) lie on the Cytoplasmic side of the membrane. The chain crosses the membrane as a helical span at residues 77–97 (AVLLSLFVVGDWVTAILSFAA). Residues 98 to 128 (SCSAAGVVVLFDRDIYACRNPQLPCGRFELA) are Extracellular-facing. Residues 129-149 (IACAFLSWAFSATSALVMFWL) form a helical membrane-spanning segment. Over 150 to 153 (LASL) the chain is Cytoplasmic.

Belongs to the Casparian strip membrane proteins (CASP) family. Homodimer and heterodimers.

Its subcellular location is the cell membrane. The sequence is that of CASP-like protein 5B1 from Oryza sativa subsp. indica (Rice).